Reading from the N-terminus, the 395-residue chain is Hdr-like menaquinol oxidoreductase integral membrane subunit (395 aa).

10 helical membrane passes run 15–35 (YFAL…AYVL), 57–77 (IPYF…AGVF), 88–108 (IAAY…ALDI), 126–146 (IFSW…IYLL), 158–178 (FMAG…GAIY), 196–216 (FIVC…YFTF), 231–251 (LALI…VEGL), 274–294 (VFWS…IIVL), 305–325 (ITFA…YLII), and 364–384 (IGLI…FALI).

The protein belongs to the NrfD family. Consists of five subunits: an integral membrane subunit, a cytochrome b-like subunit, a cytochrome c subunit and two iron-sulfur subunits.

The protein resides in the cell membrane. Has menaquinol-oxidizing activity. HmeB subunit may function as a menaquinol-oxidizing site. HmeA, HmeB and HmeE subunits may together catalyze electron transfer from menaquinol to cytochrome c. The chain is Hdr-like menaquinol oxidoreductase integral membrane subunit (hmeB) from Archaeoglobus fulgidus (strain ATCC 49558 / DSM 4304 / JCM 9628 / NBRC 100126 / VC-16).